The sequence spans 23 residues: Protein YqfH (23 aa).

The sequence is that of Protein YqfH from Escherichia coli (strain K12).